Here is a 185-residue protein sequence, read N- to C-terminus: Ribosome-recycling factor (185 aa).

The protein belongs to the RRF family.

Its subcellular location is the cytoplasm. In terms of biological role, responsible for the release of ribosomes from messenger RNA at the termination of protein biosynthesis. May increase the efficiency of translation by recycling ribosomes from one round of translation to another. This Enterobacter sp. (strain 638) protein is Ribosome-recycling factor.